Here is a 661-residue protein sequence, read N- to C-terminus: Pumilio domain-containing protein C56F2.08c (661 aa).

The RRM domain occupies 1-74 (MLYVSNLPVG…GPVQVMLAKP (74 aa)). A Phosphoserine modification is found at serine 102. Position 104 is a phosphothreonine (threonine 104). The residue at position 105 (serine 105) is a Phosphoserine. One can recognise a PUM-HD domain in the interval 129 to 482 (INLDIVDSMI…RLMEEVGMTS (354 aa)). 4 Pumilio repeats span residues 191–226 (SMLD…AMLE), 227–263 (RIAP…LIVK), 264–302 (HLRP…VMAR), and 374–410 (HLAT…LLLK). Phosphoserine is present on residues serine 482, serine 486, serine 488, and serine 490.

The protein localises to the cytoplasm. In Schizosaccharomyces pombe (strain 972 / ATCC 24843) (Fission yeast), this protein is Pumilio domain-containing protein C56F2.08c.